The sequence spans 342 residues: Deoxyhypusine synthase regulatory subunit (342 aa).

NAD(+)-binding positions include 72–76 (SNLIS), 98–100 (TAG), E104, D213, 282–283 (TG), and 316–317 (DA).

This sequence belongs to the deoxyhypusine synthase family. As to quaternary structure, heterotetramer formed by a homodimer of the non-catalytic regulatory subunit DHSp and a homodimer of the catalytic subunit DHSc where DHSc appears to bind spermidine and DHSp appears to bind NAD(+).

It participates in protein modification; eIF5A hypusination. Required for the activation and stability of deoxyhypusine synthase DHSc. Required for cell growth and survival. The chain is Deoxyhypusine synthase regulatory subunit from Trypanosoma brucei brucei (strain 927/4 GUTat10.1).